The primary structure comprises 437 residues: Glutamate-1-semialdehyde 2,1-aminomutase (437 aa).

Lys273 is modified (N6-(pyridoxal phosphate)lysine).

The protein belongs to the class-III pyridoxal-phosphate-dependent aminotransferase family. HemL subfamily. Homodimer. Pyridoxal 5'-phosphate is required as a cofactor.

It localises to the cytoplasm. It catalyses the reaction (S)-4-amino-5-oxopentanoate = 5-aminolevulinate. It participates in porphyrin-containing compound metabolism; protoporphyrin-IX biosynthesis; 5-aminolevulinate from L-glutamyl-tRNA(Glu): step 2/2. The protein is Glutamate-1-semialdehyde 2,1-aminomutase of Chlamydia felis (strain Fe/C-56) (Chlamydophila felis).